A 328-amino-acid polypeptide reads, in one-letter code: DNA-directed RNA polymerase subunit alpha 1 (328 aa).

The tract at residues 1–234 is alpha N-terminal domain (alpha-NTD); sequence MQGFVKDFLK…GQLDEFVDER (234 aa). The tract at residues 248 to 328 is alpha C-terminal domain (alpha-CTD); it reads FDPILLRPVN…NWPPASLIED (81 aa).

This sequence belongs to the RNA polymerase alpha chain family. Homodimer. The RNAP catalytic core consists of 2 alpha, 1 beta, 1 beta' and 1 omega subunit. When a sigma factor is associated with the core the holoenzyme is formed, which can initiate transcription.

The enzyme catalyses RNA(n) + a ribonucleoside 5'-triphosphate = RNA(n+1) + diphosphate. DNA-dependent RNA polymerase catalyzes the transcription of DNA into RNA using the four ribonucleoside triphosphates as substrates. The chain is DNA-directed RNA polymerase subunit alpha 1 from Psychromonas ingrahamii (strain DSM 17664 / CCUG 51855 / 37).